Consider the following 341-residue polypeptide: Ferredoxin--NADP reductase (341 aa).

FAD is bound by residues glutamate 36, glutamine 44, phenylalanine 49, valine 89, phenylalanine 123, aspartate 289, and threonine 329.

It belongs to the ferredoxin--NADP reductase type 2 family. As to quaternary structure, homodimer. FAD is required as a cofactor.

It carries out the reaction 2 reduced [2Fe-2S]-[ferredoxin] + NADP(+) + H(+) = 2 oxidized [2Fe-2S]-[ferredoxin] + NADPH. The sequence is that of Ferredoxin--NADP reductase from Ligilactobacillus salivarius (strain UCC118) (Lactobacillus salivarius).